A 274-amino-acid chain; its full sequence is Formamidopyrimidine-DNA glycosylase (274 aa).

Residue proline 2 is the Schiff-base intermediate with DNA of the active site. Glutamate 3 functions as the Proton donor in the catalytic mechanism. Lysine 58 acts as the Proton donor; for beta-elimination activity in catalysis. DNA-binding residues include histidine 91, arginine 110, and lysine 152. Residues 237-271 (KVYGRKNLPCLVCENKIETVVIAGRHSAFCPHCQP) form an FPG-type zinc finger. Residue arginine 261 is the Proton donor; for delta-elimination activity of the active site.

The protein belongs to the FPG family. Monomer. Zn(2+) serves as cofactor.

The catalysed reaction is Hydrolysis of DNA containing ring-opened 7-methylguanine residues, releasing 2,6-diamino-4-hydroxy-5-(N-methyl)formamidopyrimidine.. It catalyses the reaction 2'-deoxyribonucleotide-(2'-deoxyribose 5'-phosphate)-2'-deoxyribonucleotide-DNA = a 3'-end 2'-deoxyribonucleotide-(2,3-dehydro-2,3-deoxyribose 5'-phosphate)-DNA + a 5'-end 5'-phospho-2'-deoxyribonucleoside-DNA + H(+). In terms of biological role, involved in base excision repair of DNA damaged by oxidation or by mutagenic agents. Acts as a DNA glycosylase that recognizes and removes damaged bases. Has a preference for oxidized purines, such as 7,8-dihydro-8-oxoguanine (8-oxoG). Has AP (apurinic/apyrimidinic) lyase activity and introduces nicks in the DNA strand. Cleaves the DNA backbone by beta-delta elimination to generate a single-strand break at the site of the removed base with both 3'- and 5'-phosphates. The sequence is that of Formamidopyrimidine-DNA glycosylase from Legionella pneumophila (strain Paris).